A 187-amino-acid chain; its full sequence is UPF0301 protein YqgE (187 aa).

The protein belongs to the UPF0301 (AlgH) family.

This chain is UPF0301 protein YqgE, found in Salmonella heidelberg (strain SL476).